A 150-amino-acid polypeptide reads, in one-letter code: UPF0178 protein AZOSEA36080 (150 aa).

Belongs to the UPF0178 family.

This Aromatoleum aromaticum (strain DSM 19018 / LMG 30748 / EbN1) (Azoarcus sp. (strain EbN1)) protein is UPF0178 protein AZOSEA36080.